The primary structure comprises 596 residues: Elongation factor 4 (596 aa).

The tr-type G domain maps to lysine 2–glutamate 184. GTP-binding positions include aspartate 14–threonine 19 and asparagine 131–aspartate 134.

Belongs to the TRAFAC class translation factor GTPase superfamily. Classic translation factor GTPase family. LepA subfamily.

Its subcellular location is the cell inner membrane. The catalysed reaction is GTP + H2O = GDP + phosphate + H(+). Its function is as follows. Required for accurate and efficient protein synthesis under certain stress conditions. May act as a fidelity factor of the translation reaction, by catalyzing a one-codon backward translocation of tRNAs on improperly translocated ribosomes. Back-translocation proceeds from a post-translocation (POST) complex to a pre-translocation (PRE) complex, thus giving elongation factor G a second chance to translocate the tRNAs correctly. Binds to ribosomes in a GTP-dependent manner. The sequence is that of Elongation factor 4 from Shewanella halifaxensis (strain HAW-EB4).